A 317-amino-acid polypeptide reads, in one-letter code: Transaldolase (317 aa).

The Schiff-base intermediate with substrate role is filled by Lys-126.

Belongs to the transaldolase family. Type 1 subfamily. As to quaternary structure, homodimer.

It is found in the cytoplasm. It catalyses the reaction D-sedoheptulose 7-phosphate + D-glyceraldehyde 3-phosphate = D-erythrose 4-phosphate + beta-D-fructose 6-phosphate. The protein operates within carbohydrate degradation; pentose phosphate pathway; D-glyceraldehyde 3-phosphate and beta-D-fructose 6-phosphate from D-ribose 5-phosphate and D-xylulose 5-phosphate (non-oxidative stage): step 2/3. Functionally, transaldolase is important for the balance of metabolites in the pentose-phosphate pathway. This chain is Transaldolase, found in Burkholderia orbicola (strain MC0-3).